Here is a 341-residue protein sequence, read N- to C-terminus: Protein BEARSKIN2 (341 aa).

In terms of domain architecture, NAC spans 9–160; the sequence is VPPGFRFHPT…GWVVCRVFMK (152 aa). Residues 109–166 mediate DNA binding; sequence IGMRKTLVFYKGRAPHGQKTDWIMHEYRLEDADDPQANPSEDGWVVCRVFMKKNLFKV.

As to expression, expressed throughout the root cap, in both columella (COL) and lateral root cap (LRC) cells, with higher levels in the COL-adjoining LRC than the upper LRC. Also present at low levels expression in the tips of cotyledons and the cotyledon vasculature, as weel as in vasculature of the first pair of true leaves and at the hydathodes.

The protein localises to the nucleus. Functionally, transcription activator. Together with BRN1 and SMB, regulates cellular maturation of root cap. Promotes the expression of genes involved in secondary cell walls (SCW) biosynthesis. The sequence is that of Protein BEARSKIN2 (BRN2) from Arabidopsis thaliana (Mouse-ear cress).